The following is a 418-amino-acid chain: Tol-Pal system protein TolB (418 aa).

Residues Met1–Ala21 form the signal peptide.

The protein belongs to the TolB family. In terms of assembly, the Tol-Pal system is composed of five core proteins: the inner membrane proteins TolA, TolQ and TolR, the periplasmic protein TolB and the outer membrane protein Pal. They form a network linking the inner and outer membranes and the peptidoglycan layer.

It localises to the periplasm. In terms of biological role, part of the Tol-Pal system, which plays a role in outer membrane invagination during cell division and is important for maintaining outer membrane integrity. This Wolbachia pipientis subsp. Culex pipiens (strain wPip) protein is Tol-Pal system protein TolB.